We begin with the raw amino-acid sequence, 205 residues long: Thymidylate kinase (205 aa).

7–14 is a binding site for ATP; sequence GIDGSGKT.

The protein belongs to the thymidylate kinase family.

It carries out the reaction dTMP + ATP = dTDP + ADP. In terms of biological role, phosphorylation of dTMP to form dTDP in both de novo and salvage pathways of dTTP synthesis. The sequence is that of Thymidylate kinase from Wolbachia pipientis subsp. Culex pipiens (strain wPip).